We begin with the raw amino-acid sequence, 358 residues long: DNA polymerase IV (358 aa).

The UmuC domain occupies 4–185; that stretch reads IIHIDMDCYF…LSLRKIPGVG (182 aa). Residues D8 and D103 each coordinate Mg(2+). E104 is a catalytic residue.

Belongs to the DNA polymerase type-Y family. As to quaternary structure, monomer. Mg(2+) is required as a cofactor.

The protein localises to the cytoplasm. The catalysed reaction is DNA(n) + a 2'-deoxyribonucleoside 5'-triphosphate = DNA(n+1) + diphosphate. Its function is as follows. Poorly processive, error-prone DNA polymerase involved in untargeted mutagenesis. Copies undamaged DNA at stalled replication forks, which arise in vivo from mismatched or misaligned primer ends. These misaligned primers can be extended by PolIV. Exhibits no 3'-5' exonuclease (proofreading) activity. May be involved in translesional synthesis, in conjunction with the beta clamp from PolIII. The sequence is that of DNA polymerase IV from Shewanella baltica (strain OS155 / ATCC BAA-1091).